Here is a 142-residue protein sequence, read N- to C-terminus: Immunoglobulin iota chain (142 aa).

The signal sequence occupies residues Met-1–Pro-19. Positions Gln-20 to Cys-41 are framework-1. Cys-41 and Cys-115 are disulfide-bonded. The tract at residues Thr-42–Trp-56 is complementarity-determining-1. Residues Tyr-57–Arg-70 form a framework-2 region. Residues Tyr-71 to Pro-81 form a complementarity-determining-2 region. The framework-3 stretch occupies residues Asp-82 to Cys-115.

This sequence belongs to the immunoglobulin superfamily. As to quaternary structure, interacts with IGLL1. Interacts with SYNV1/HRD1 (via N-terminus); this interaction leads to increased VPREB1A ubiquitination and degradation in pre-B cells, possibly through a lysosomal, not proteasomal, pathway. Only expressed by pre-B-cells.

Its subcellular location is the endoplasmic reticulum. Associates with the Ig-mu chain to form a molecular complex that is expressed on the surface of pre-B-cells. This complex presumably regulates Ig gene rearrangements in the early steps of B-cell differentiation. In Mus musculus (Mouse), this protein is Immunoglobulin iota chain.